The chain runs to 367 residues: Ataxin-7-like protein 3 (367 aa).

An SGF11-type zinc finger spans residues 84–105 (CVCPNCSRSIAASRFAPHLEKC). Low complexity predominate over residues 116-125 (ANRRIASSNN). Positions 116–184 (ANRRIASSNN…GELSGSVNPD (69 aa)) are disordered. The span at 132 to 141 (DQEDNDDIND) shows a compositional bias: acidic residues. Residues 199–266 (LGPEELRSIL…TMLENEAYEP (68 aa)) enclose the SCA7 domain. Over residues 280 to 299 (ASSDISPSDSASSKASTNNS) the composition is skewed to low complexity. Residues 280–367 (ASSDISPSDS…PAPSIYDDLN (88 aa)) are disordered. Residues 318 to 329 (GERDKAQERDRI) are compositionally biased toward basic and acidic residues. The segment covering 330–346 (AGSGSSGSSSQNALGLS) has biased composition (low complexity).

The protein belongs to the SGF11 family. In terms of assembly, component of some SAGA transcription coactivator-HAT complexes. Within the SAGA complex, participates in a subcomplex of SAGA called the DUB module (deubiquitination module).

Its subcellular location is the nucleus. Functionally, component of the transcription regulatory histone acetylation (HAT) complex SAGA, a multiprotein complex that activates transcription by remodeling chromatin and mediating histone acetylation and deubiquitination. Within the SAGA complex, participates in a subcomplex that specifically deubiquitinates histone H2B. The SAGA complex is recruited to specific gene promoters by activators, where it is required for transcription. The protein is Ataxin-7-like protein 3 (atxn7l3) of Danio rerio (Zebrafish).